Reading from the N-terminus, the 428-residue chain is 3-phosphoshikimate 1-carboxyvinyltransferase (428 aa).

Positions 23, 24, and 28 each coordinate 3-phosphoshikimate. Lys-23 lines the phosphoenolpyruvate pocket. Residues Gly-97 and Arg-125 each coordinate phosphoenolpyruvate. Ser-170, Ser-171, Gln-172, Ser-198, Asp-314, Asn-337, and Lys-341 together coordinate 3-phosphoshikimate. Gln-172 contacts phosphoenolpyruvate. Residue Asp-314 is the Proton acceptor of the active site. Phosphoenolpyruvate is bound by residues Arg-345, Arg-387, and Lys-412.

Belongs to the EPSP synthase family. Monomer.

It is found in the cytoplasm. The catalysed reaction is 3-phosphoshikimate + phosphoenolpyruvate = 5-O-(1-carboxyvinyl)-3-phosphoshikimate + phosphate. It functions in the pathway metabolic intermediate biosynthesis; chorismate biosynthesis; chorismate from D-erythrose 4-phosphate and phosphoenolpyruvate: step 6/7. Its function is as follows. Catalyzes the transfer of the enolpyruvyl moiety of phosphoenolpyruvate (PEP) to the 5-hydroxyl of shikimate-3-phosphate (S3P) to produce enolpyruvyl shikimate-3-phosphate and inorganic phosphate. The sequence is that of 3-phosphoshikimate 1-carboxyvinyltransferase from Yersinia pseudotuberculosis serotype IB (strain PB1/+).